The following is a 115-amino-acid chain: U3-lycotoxin-Ls1q (115 aa).

An N-terminal signal peptide occupies residues 1 to 20; sequence MKFVLLFGVLLVTLFSYSSA. A propeptide spanning residues 21–44 is cleaved from the precursor; that stretch reads EMFDDFDQADEDELLSLIEKEEAR. 4 cysteine pairs are disulfide-bonded: cysteine 48–cysteine 63, cysteine 55–cysteine 72, cysteine 62–cysteine 87, and cysteine 74–cysteine 85.

The protein belongs to the neurotoxin 19 (CSTX) family. 01 subfamily. As to expression, expressed by the venom gland.

It is found in the secreted. The polypeptide is U3-lycotoxin-Ls1q (Lycosa singoriensis (Wolf spider)).